The sequence spans 156 residues: Arginine repressor (156 aa).

The protein belongs to the ArgR family.

The protein resides in the cytoplasm. It functions in the pathway amino-acid biosynthesis; L-arginine biosynthesis [regulation]. Regulates arginine biosynthesis genes. In Shewanella baltica (strain OS223), this protein is Arginine repressor.